A 321-amino-acid polypeptide reads, in one-letter code: Pectinesterase (321 aa).

At threonine 1 the chain carries N-acetylthreonine. The N-linked (GlcNAc...) (complex) asparagine glycan is linked to asparagine 75. Residues threonine 84 and glutamine 114 each contribute to the substrate site. Aspartate 137 (proton donor) is an active-site residue. Cysteines 151 and 171 form a disulfide. Aspartate 158 serves as the catalytic Nucleophile. Positions 226 and 228 each coordinate substrate. Asparagine 275, asparagine 290, and asparagine 319 each carry an N-linked (GlcNAc...) (complex) asparagine glycan.

The protein belongs to the pectinesterase family. Post-translationally, the N-glycans attached at Asn-75, Asn-275, Asn-290 and Asn-319 are complex oligosaccharides containing xylose, fucose, hexose and N-acetylglucosamine.

The catalysed reaction is [(1-&gt;4)-alpha-D-galacturonosyl methyl ester](n) + n H2O = [(1-&gt;4)-alpha-D-galacturonosyl](n) + n methanol + n H(+). It participates in glycan metabolism; pectin degradation; 2-dehydro-3-deoxy-D-gluconate from pectin: step 1/5. Its activity is regulated as follows. Inhibited by PMEI. The chain is Pectinesterase from Actinidia deliciosa (Kiwi).